The chain runs to 370 residues: Gametogenetin-binding protein 1 (370 aa).

2 disordered regions span residues 26–114 (VGSK…QTLT) and 240–263 (PAAP…EEAV). The span at 31-49 (GSKSTNKPLTRSQPSSSWE) shows a compositional bias: polar residues. The required for induction of mitochondrial fragmentation stretch occupies residues 225 to 370 (LYKQLQKSAM…DEMGNWPPPD (146 aa)). Basic and acidic residues predominate over residues 250–260 (GLPHEEKGERE). Positions 298 to 370 (KKFRSTDTVG…DEMGNWPPPD (73 aa)) are interaction with GGN.

As to quaternary structure, interacts with CCDC159. Interacts with isoform 1 and isoform 2 of GGN. As to expression, testis-specific. In the testis, expressed only in germ cells and not in somatic cells. Expression starts in late primary spermatocytes in stage X-XII tubules and gradually increases towards step 1-3 spermatids in stage I-III tubules. Expression then declines continuously and disappears after step 7 spermatids in stage VII tubules (at protein level).

It localises to the cytoplasm. The protein resides in the membrane. It is found in the golgi apparatus. The protein localises to the mitochondrion intermembrane space. In terms of biological role, induces mitochondrial fragmentation, possibly by promoting DNM1L-dependent fission and may play a role in mitochondrial morphogenesis during spermatogenesis. This is Gametogenetin-binding protein 1 (Ggnbp1) from Mus musculus (Mouse).